Here is a 92-residue protein sequence, read N- to C-terminus: MELAVVWSVLVAQTMLALAMAFALYRMARGPRAQDRILGLDTLYINAMLMLITFGIRTANTVYFETALIIAVIGFASSIALAKFLMRGEVIE.

3 consecutive transmembrane segments (helical) span residues 4 to 24, 36 to 56, and 62 to 82; these read AVVW…AFAL, RILG…TFGI, and VYFE…IALA.

It belongs to the CPA3 antiporters (TC 2.A.63) subunit F family. May form a hetero-oligomeric complex that consists of six subunits: PhaAB, PhaC, PhaD, PhaE, PhaF and PhaG.

Its subcellular location is the cell membrane. Part of a K(+) efflux system which is required for the adaptation of R.meliloti to alkaline pH as well as for the infection process during symbiotic nodule development. This chain is Probable K(+)/H(+) antiporter subunit F (phaF), found in Rhizobium meliloti (strain 1021) (Ensifer meliloti).